The primary structure comprises 2225 residues: Multifunctional protein pyr1-3 (2225 aa).

Position 1 is an N-acetylmethionine (methionine 1). Residues 40 to 390 (MVGYNESISD…NVCGEQQHKS (351 aa)) form a GATase (Glutamine amidotransferase) region. L-glutamine contacts are provided by serine 51, glycine 245, and glycine 247. A Glutamine amidotransferase type-1 domain is found at 196 to 388 (KVIVLDCGIK…VDNVCGEQQH (193 aa)). The active-site Nucleophile; for GATase activity is cysteine 275. Residues glutamine 279, asparagine 317, glycine 319, and phenylalanine 320 each coordinate L-glutamine. Residues histidine 361 and glutamate 363 each act as for GATase activity in the active site. The interval 391 to 405 (PMNKSKIIDCPKGIN) is linker. Residues 406 to 948 (KVLILGSGGL…TNDVNINEKS (543 aa)) form a CPSase A region. Residues 406–1461 (KVLILGSGGL…MKGPMPIENV (1056 aa)) form a CPSase (Carbamoyl-phosphate synthase) region. ATP contacts are provided by arginine 526, arginine 566, glycine 572, glycine 573, lysine 603, glutamate 610, glycine 636, isoleucine 637, histidine 638, glutamine 679, and glutamate 693. ATP-grasp domains are found at residues 530–722 (AEKL…KVAL) and 1069–1260 (SRLL…KIII). Positions 679, 693, and 695 each coordinate Mg(2+). Mn(2+) contacts are provided by glutamine 679, glutamate 693, and asparagine 695. Residues 949 to 1461 (YITLGSGSYR…MKGPMPIENV (513 aa)) form a CPSase B region. Positions 1105, 1144, 1146, 1151, 1176, 1177, 1178, 1179, 1219, and 1231 each coordinate ATP. Mg(2+) contacts are provided by glutamine 1219, glutamate 1231, and asparagine 1233. Residues glutamine 1219, glutamate 1231, and asparagine 1233 each contribute to the Mn(2+) site. The MGS-like domain occupies 1324 to 1470 (FKAPEKNVLL…VDWRTSNKII (147 aa)). Residues 1463-1797 (WRTSNKIIRL…VRGKVVKVVL (335 aa)) form a DHOase (dihydroorotase) region. Positions 1479 and 1481 each coordinate Zn(2+). Residues arginine 1483 and asparagine 1513 each contribute to the (S)-dihydroorotate site. 5 residues coordinate Zn(2+): lysine 1564, histidine 1599, cysteine 1622, histidine 1623, and glutamate 1646. Lysine 1564 carries the post-translational modification N6-carboxylysine. A (S)-dihydroorotate-binding site is contributed by arginine 1670. A Zn(2+)-binding site is contributed by aspartate 1695. Aspartate 1695 (for DHOase activity) is an active-site residue. (S)-dihydroorotate is bound by residues histidine 1699 and proline 1711. The interval 1798–1916 (RGQIAFIDGK…DTLQTAFNIS (119 aa)) is linker. The interval 1917-2225 (DNSLAGKHIF…LLALVFGAGV (309 aa)) is ATCase (Aspartate transcarbamylase). The carbamoyl phosphate site is built by arginine 1974 and threonine 1975. Lysine 2002 is an L-aspartate binding site. Residues arginine 2023, histidine 2051, and glutamine 2054 each coordinate carbamoyl phosphate. Residues arginine 2084 and arginine 2145 each coordinate L-aspartate. Carbamoyl phosphate contacts are provided by leucine 2184 and proline 2185.

This sequence in the N-terminal section; belongs to the CarA family. The protein in the 2nd section; belongs to the CarB family. In the 3rd section; belongs to the metallo-dependent hydrolases superfamily. DHOase family. CAD subfamily. It in the C-terminal section; belongs to the aspartate/ornithine carbamoyltransferase superfamily. ATCase family. Homohexamer. The cofactor is Mg(2+). Mn(2+) serves as cofactor. Zn(2+) is required as a cofactor.

It localises to the cytoplasm. It catalyses the reaction hydrogencarbonate + L-glutamine + 2 ATP + H2O = carbamoyl phosphate + L-glutamate + 2 ADP + phosphate + 2 H(+). It carries out the reaction L-glutamine + H2O = L-glutamate + NH4(+). The catalysed reaction is hydrogencarbonate + NH4(+) + 2 ATP = carbamoyl phosphate + 2 ADP + phosphate + 2 H(+). The enzyme catalyses carbamoyl phosphate + L-aspartate = N-carbamoyl-L-aspartate + phosphate + H(+). It catalyses the reaction (S)-dihydroorotate + H2O = N-carbamoyl-L-aspartate + H(+). Its pathway is pyrimidine metabolism; UMP biosynthesis via de novo pathway; (S)-dihydroorotate from bicarbonate: step 1/3. The protein operates within pyrimidine metabolism; UMP biosynthesis via de novo pathway; (S)-dihydroorotate from bicarbonate: step 2/3. It functions in the pathway pyrimidine metabolism; UMP biosynthesis via de novo pathway; (S)-dihydroorotate from bicarbonate: step 3/3. Its activity is regulated as follows. Allosterically regulated and controlled by phosphorylation. 5-phosphoribose 1-diphosphate is an activator while UMP is an inhibitor of the CPSase reaction. In terms of biological role, multifunctional protein that encodes the first 3 enzymatic activities of the de novo pyrimidine pathway: carbamoylphosphate synthetase (CPSase; EC 6.3.5.5), aspartate transcarbamylase (ATCase; EC 2.1.3.2) and dihydroorotase (DHOase; EC 3.5.2.3). The CPSase-function is accomplished in 2 steps, by a glutamine-dependent amidotransferase activity (GATase) that binds and cleaves glutamine to produce ammonia, followed by an ammonium-dependent carbamoyl phosphate synthetase, which reacts with the ammonia, hydrogencarbonate and ATP to form carbamoyl phosphate. The endogenously produced carbamoyl phosphate is sequestered and channeled to the ATCase active site. ATCase then catalyzes the formation of carbamoyl-L-aspartate from L-aspartate and carbamoyl phosphate. In the last step, DHOase catalyzes the cyclization of carbamoyl aspartate to dihydroorotate. The protein is Multifunctional protein pyr1-3 (pyr1-3) of Dictyostelium discoideum (Social amoeba).